The following is a 613-amino-acid chain: Probable inactive purple acid phosphatase 1 (613 aa).

Positions 1–24 (MRESLVAILVTVISVLGAIHQVKS) are cleaved as a signal peptide. N-linked (GlcNAc...) asparagine glycosylation is found at asparagine 89 and asparagine 116. Position 295 (aspartate 295) interacts with Fe cation. N-linked (GlcNAc...) asparagine glycosylation occurs at asparagine 316. Fe cation-binding residues include aspartate 336 and tyrosine 339. Aspartate 336 is a Zn(2+) binding site. Positions 369, 458, and 500 each coordinate Zn(2+). Asparagine 369 provides a ligand contact to substrate. Substrate is bound at residue 500–502 (HAH). A Fe cation-binding site is contributed by histidine 502. Asparagine 528 and asparagine 551 each carry an N-linked (GlcNAc...) asparagine glycan.

This sequence belongs to the metallophosphoesterase superfamily. Purple acid phosphatase family. In terms of assembly, homodimer. Fe cation is required as a cofactor. The cofactor is Zn(2+). Expressed in roots, stems, leaves, flowers and siliques.

The protein localises to the secreted. The protein is Probable inactive purple acid phosphatase 1 (PAP1) of Arabidopsis thaliana (Mouse-ear cress).